The following is a 680-amino-acid chain: DNA-directed RNA polymerase subunit beta' (680 aa).

Residues Cys-68, Cys-70, Cys-86, and Cys-89 each coordinate Zn(2+). Mg(2+) contacts are provided by Asp-488, Asp-490, and Asp-492.

This sequence belongs to the RNA polymerase beta' chain family. RpoC1 subfamily. In terms of assembly, in plastids the minimal PEP RNA polymerase catalytic core is composed of four subunits: alpha, beta, beta', and beta''. When a (nuclear-encoded) sigma factor is associated with the core the holoenzyme is formed, which can initiate transcription. It depends on Mg(2+) as a cofactor. The cofactor is Zn(2+).

It is found in the plastid. The protein resides in the chloroplast. It carries out the reaction RNA(n) + a ribonucleoside 5'-triphosphate = RNA(n+1) + diphosphate. Functionally, DNA-dependent RNA polymerase catalyzes the transcription of DNA into RNA using the four ribonucleoside triphosphates as substrates. In Nicotiana tabacum (Common tobacco), this protein is DNA-directed RNA polymerase subunit beta'.